A 553-amino-acid chain; its full sequence is Glutamate--tRNA ligase (553 aa).

The 'HIGH' region motif lies at 41–51; sequence PSPTGFQHIGG. The short motif at 293 to 297 is the 'KMSKS' region element; sequence KLSKR. An ATP-binding site is contributed by Lys296.

This sequence belongs to the class-I aminoacyl-tRNA synthetase family. Glutamate--tRNA ligase type 1 subfamily. As to quaternary structure, monomer.

The protein resides in the cytoplasm. It catalyses the reaction tRNA(Glu) + L-glutamate + ATP = L-glutamyl-tRNA(Glu) + AMP + diphosphate. In terms of biological role, catalyzes the attachment of glutamate to tRNA(Glu) in a two-step reaction: glutamate is first activated by ATP to form Glu-AMP and then transferred to the acceptor end of tRNA(Glu). This Clostridium beijerinckii (strain ATCC 51743 / NCIMB 8052) (Clostridium acetobutylicum) protein is Glutamate--tRNA ligase.